An 871-amino-acid polypeptide reads, in one-letter code: Probable receptor-like protein kinase At2g21480 (871 aa).

A signal peptide spans 1-39; it reads MEIRKKPNIPMCLVLDSSSRPFMTLLFTILLFLTGLASA. Over 40–439 the chain is Extracellular; the sequence is VGAVGGSPTA…GQRASMGKQG (400 aa). Residues Asn-169, Asn-182, Asn-253, Asn-316, and Asn-381 are each glycosylated (N-linked (GlcNAc...) asparagine). A helical transmembrane segment spans residues 440-460; it reads MVATAGFVMMFGAFVGLGAMV. Over 461-871 the chain is Cytoplasmic; that stretch reads YKWKKRPQDW…FTQFASLNGR (411 aa). The 273-residue stretch at 525 to 797 folds into the Protein kinase domain; that stretch reads FDASEIIGVG…GDVLWNLEYA (273 aa). Residues 531-539 and Lys-553 each bind ATP; that span reads IGVGGFGNV. Asp-649 acts as the Proton acceptor in catalysis. A disordered region spans residues 808–871; sequence KAEAEEVETP…FTQFASLNGR (64 aa). Positions 817–839 are enriched in low complexity; that stretch reads PKPVAVPAAAPTSPAATTAAASE. Over residues 854–871 the composition is skewed to polar residues; sequence DQHSGTTMFTQFASLNGR.

This sequence belongs to the protein kinase superfamily. Ser/Thr protein kinase family.

The protein localises to the membrane. This is Probable receptor-like protein kinase At2g21480 from Arabidopsis thaliana (Mouse-ear cress).